Consider the following 523-residue polypeptide: Metalloprotease TIKI2 (523 aa).

The first 26 residues, 1-26 (MGKTMWARAVFLCFSVGTLLWQEVLT), serve as a signal peptide directing secretion. Residues 27 to 499 (RRIPVDTGQC…HSQSNSSPKC (473 aa)) are Extracellular-facing. 4 N-linked (GlcNAc...) asparagine glycosylation sites follow: N225, N234, N283, and N341. Residues 500-516 (LSASPAFLYTLVTLCLI) traverse the membrane as a helical segment. Residues 517–523 (TTMRTRS) lie on the Cytoplasmic side of the membrane.

Belongs to the TIKI family. Mn(2+) is required as a cofactor. Co(2+) serves as cofactor.

It localises to the cell membrane. In terms of biological role, metalloprotease that acts as a negative regulator of the Wnt signaling pathway by mediating the cleavage of the N-terminal residues of a subset of Wnt proteins. Following cleavage, Wnt proteins become oxidized and form large disulfide-bond oligomers, leading to their inactivation. Able to cleave wnt8. Required for head formation. In Xenopus tropicalis (Western clawed frog), this protein is Metalloprotease TIKI2 (trabd2b).